The chain runs to 61 residues: Sodium/potassium-transporting ATPase subunit gamma (61 aa).

A helical membrane pass occupies residues K24–G44.

This sequence belongs to the FXYD family. Regulatory subunit of the sodium/potassium-transporting ATPase which is composed of a catalytic alpha subunit, an auxiliary non-catalytic beta subunit and an additional regulatory subunit.

The protein resides in the membrane. Functionally, may be involved in forming the receptor site for cardiac glycoside binding or may modulate the transport function of the sodium ATPase. The polypeptide is Sodium/potassium-transporting ATPase subunit gamma (fxyd2) (Xenopus laevis (African clawed frog)).